The sequence spans 556 residues: Arginine--tRNA ligase (556 aa).

The short motif at 132-142 (ANPTGDLHLGH) is the 'HIGH' region element.

The protein belongs to the class-I aminoacyl-tRNA synthetase family. As to quaternary structure, monomer.

Its subcellular location is the cytoplasm. It carries out the reaction tRNA(Arg) + L-arginine + ATP = L-arginyl-tRNA(Arg) + AMP + diphosphate. The protein is Arginine--tRNA ligase of Bacillus cereus (strain ATCC 10987 / NRS 248).